The chain runs to 275 residues: 2,3,4,5-tetrahydropyridine-2,6-dicarboxylate N-succinyltransferase (275 aa).

Residues arginine 106 and aspartate 143 each coordinate substrate.

It belongs to the transferase hexapeptide repeat family. In terms of assembly, homotrimer.

Its subcellular location is the cytoplasm. The enzyme catalyses (S)-2,3,4,5-tetrahydrodipicolinate + succinyl-CoA + H2O = (S)-2-succinylamino-6-oxoheptanedioate + CoA. Its pathway is amino-acid biosynthesis; L-lysine biosynthesis via DAP pathway; LL-2,6-diaminopimelate from (S)-tetrahydrodipicolinate (succinylase route): step 1/3. This is 2,3,4,5-tetrahydropyridine-2,6-dicarboxylate N-succinyltransferase from Burkholderia mallei (strain NCTC 10247).